A 133-amino-acid polypeptide reads, in one-letter code: Ribulose bisphosphate carboxylase small subunit (133 aa).

Belongs to the RuBisCO small chain family. As to quaternary structure, heterohexadecamer of 8 large and 8 small subunits.

RuBisCO catalyzes two reactions: the carboxylation of D-ribulose 1,5-bisphosphate, the primary event in carbon dioxide fixation, as well as the oxidative fragmentation of the pentose substrate. Both reactions occur simultaneously and in competition at the same active site. Although the small subunit is not catalytic it is essential for maximal activity. The sequence is that of Ribulose bisphosphate carboxylase small subunit from Xanthobacter flavus.